The following is a 72-amino-acid chain: MAKEDVIEVEGTVVEPLPNTMFKVELDNGHKVLAHISGKMRMNFVRILPGDRVMVELSPYDLNRGRIIYRFK.

The S1-like domain maps to methionine 1–lysine 72.

The protein belongs to the IF-1 family. In terms of assembly, component of the 30S ribosomal translation pre-initiation complex which assembles on the 30S ribosome in the order IF-2 and IF-3, IF-1 and N-formylmethionyl-tRNA(fMet); mRNA recruitment can occur at any time during PIC assembly.

Its subcellular location is the cytoplasm. Its function is as follows. One of the essential components for the initiation of protein synthesis. Stabilizes the binding of IF-2 and IF-3 on the 30S subunit to which N-formylmethionyl-tRNA(fMet) subsequently binds. Helps modulate mRNA selection, yielding the 30S pre-initiation complex (PIC). Upon addition of the 50S ribosomal subunit IF-1, IF-2 and IF-3 are released leaving the mature 70S translation initiation complex. The sequence is that of Translation initiation factor IF-1 from Syntrophomonas wolfei subsp. wolfei (strain DSM 2245B / Goettingen).